The primary structure comprises 342 residues: tRNA-specific 2-thiouridylase MnmA (342 aa).

ATP is bound by residues 6–13 (LLSGGVDS) and Leu32. Residue Cys92 is the Nucleophile of the active site. Residues Cys92 and Cys191 are joined by a disulfide bond. Gly116 is a binding site for ATP. The segment at 138-140 (KDQ) is interaction with tRNA. Catalysis depends on Cys191, which acts as the Cysteine persulfide intermediate. The interaction with tRNA stretch occupies residues 293-294 (RY).

Belongs to the MnmA/TRMU family.

It localises to the cytoplasm. It carries out the reaction S-sulfanyl-L-cysteinyl-[protein] + uridine(34) in tRNA + AH2 + ATP = 2-thiouridine(34) in tRNA + L-cysteinyl-[protein] + A + AMP + diphosphate + H(+). Functionally, catalyzes the 2-thiolation of uridine at the wobble position (U34) of tRNA, leading to the formation of s(2)U34. This is tRNA-specific 2-thiouridylase MnmA from Helicobacter acinonychis (strain Sheeba).